A 219-amino-acid chain; its full sequence is Albonoursin synthase (219 aa).

The protein belongs to the nitroreductase family. Homomer. FMN is required as a cofactor. Post-translationally, the N-terminus is blocked.

The protein localises to the cytoplasm. It carries out the reaction cyclo(L-phenylalanyl-L-leucyl) + 2 O2 = albonoursin + 2 H2O2. Involved in the biosynthesis of albonoursin (cyclo[(alpha,beta-dehydro-Phe)-(alpha,beta-dehydro-Leu)]), an antibacterial peptide. Catalyzes the formation of alpha,beta-dehydro-Phe (DPhe) and alpha,beta-dehydro-Leu (DLeu) residues during the biosynthesis of albonoursin. The catalytic reaction of cyclo(L-Phe-L-Leu) occurs in a two-step sequential alpha-beta-dehydrogenation leading first to cyclo(alpha,beta-dehydro-Phe-L-Leu) and finally to albonoursin. Can also use cyclo(L-Phe-L-His), cyclo(L-Trp-L-Trp), cyclo(L-Leu-L-Ala), cyclo(L-Phe-Gly), cyclo(L-Leu-Gly), cyclo(L-Ser-Gly) and cyclo(L-Glu-Gly) as substrate suggesting that the diketopiperazine ring is essential for the enzymatic reaction. This Streptomyces noursei (Streptomyces albulus) protein is Albonoursin synthase (albA).